Reading from the N-terminus, the 150-residue chain is Large ribosomal subunit protein bL9 (150 aa).

This sequence belongs to the bacterial ribosomal protein bL9 family.

In terms of biological role, binds to the 23S rRNA. The sequence is that of Large ribosomal subunit protein bL9 from Paraburkholderia xenovorans (strain LB400).